The primary structure comprises 294 residues: MEKVKGAMTALITPFRNGKLDEEAYARLIQRQIDNAIDAVVPVGTTGESATLSHAEHKRCIEIAVEVCKGTSTKVMAGAGSNATHEAIDLAQFAQKAGADAILSVSPYYNKPTQEGLYQHYKALAESVDIPVLLYNVPGRTGVDIKPETVCRLFDDVNNIYGIKEATGSIERCVELLAKRPELYVISGDDAINYPIIANGGMGVISVTANLLPDKISMLVHAGLAGQFDTAKMINDELFDINKALFCESNPIPIKAAMYIAGLIDTLEYRLPLLEPSKEHMQLIEKTLAKYEVV.

T46 contributes to the pyruvate binding site. The Proton donor/acceptor role is filled by Y135. K164 acts as the Schiff-base intermediate with substrate in catalysis. Position 205 (I205) interacts with pyruvate.

The protein belongs to the DapA family. As to quaternary structure, homotetramer; dimer of dimers.

It localises to the cytoplasm. It carries out the reaction L-aspartate 4-semialdehyde + pyruvate = (2S,4S)-4-hydroxy-2,3,4,5-tetrahydrodipicolinate + H2O + H(+). The protein operates within amino-acid biosynthesis; L-lysine biosynthesis via DAP pathway; (S)-tetrahydrodipicolinate from L-aspartate: step 3/4. Its function is as follows. Catalyzes the condensation of (S)-aspartate-beta-semialdehyde [(S)-ASA] and pyruvate to 4-hydroxy-tetrahydrodipicolinate (HTPA). This is 4-hydroxy-tetrahydrodipicolinate synthase from Nitratiruptor sp. (strain SB155-2).